A 160-amino-acid polypeptide reads, in one-letter code: Transcriptional regulator MraZ (160 aa).

SpoVT-AbrB domains are found at residues 5-51 and 80-123; these read TFEK…GKAL and MAKL…EREA.

It belongs to the MraZ family. As to quaternary structure, forms oligomers.

It is found in the cytoplasm. It localises to the nucleoid. This Phenylobacterium zucineum (strain HLK1) protein is Transcriptional regulator MraZ.